A 271-amino-acid chain; its full sequence is uncharacterized protein (271 aa).

Residues 1–202 (MLNSPGTRRP…APSSALSHQG (202 aa)) are disordered. Over residues 10–23 (PVKEAQKYGEDSQK) the composition is skewed to basic and acidic residues. Low complexity-rich tracts occupy residues 33–50 (RSSVTTLSASALSDSSSP) and 59–73 (GRPSTPARAPATSAP). Polar residues predominate over residues 92-101 (TRSSANQLPQ). The span at 121 to 142 (LRRRSHGDRCVPRSRRRPRPRP) shows a compositional bias: basic residues.

This is an uncharacterized protein from Homo sapiens (Human).